A 216-amino-acid chain; its full sequence is Octanoyltransferase (216 aa).

Residues 31–205 enclose the BPL/LPL catalytic domain; that stretch reads STTRDEVWLV…ELVTLLDYEQ (175 aa). Substrate is bound by residues 70-77, 137-139, and 150-152; these read RGGQVTYH, SLG, and GLA. Catalysis depends on C168, which acts as the Acyl-thioester intermediate.

Belongs to the LipB family.

Its subcellular location is the cytoplasm. It catalyses the reaction octanoyl-[ACP] + L-lysyl-[protein] = N(6)-octanoyl-L-lysyl-[protein] + holo-[ACP] + H(+). It participates in protein modification; protein lipoylation via endogenous pathway; protein N(6)-(lipoyl)lysine from octanoyl-[acyl-carrier-protein]: step 1/2. In terms of biological role, catalyzes the transfer of endogenously produced octanoic acid from octanoyl-acyl-carrier-protein onto the lipoyl domains of lipoate-dependent enzymes. Lipoyl-ACP can also act as a substrate although octanoyl-ACP is likely to be the physiological substrate. The polypeptide is Octanoyltransferase (Vibrio cholerae serotype O1 (strain ATCC 39541 / Classical Ogawa 395 / O395)).